The sequence spans 326 residues: Vitamin B12 import system permease protein BtuC (326 aa).

Over 1–10 the chain is Cytoplasmic; sequence MLTLARQQQR. The chain crosses the membrane as a helical span at residues 11 to 35; sequence QNIRWLLCLSVLMLLALLLSLCAGE. Over 36–56 the chain is Periplasmic; it reads QWISPGDWFSPRGELFVWQIR. A helical transmembrane segment spans residues 57–81; it reads LPRTLAVLLVGAALAISGAVMQALF. Over 82-92 the chain is Cytoplasmic; that stretch reads ENPLAEPGLLG. Residues 93 to 107 form a helical membrane-spanning segment; it reads VSNGAGVGLIAAVLL. Topologically, residues 108 to 113 are periplasmic; the sequence is GQGQLP. Residues 114 to 138 traverse the membrane as a helical segment; the sequence is NWALGLCAIAGALIITLILLRFARR. At 139-141 the chain is on the cytoplasmic side; sequence HLS. The helical transmembrane segment at 142-166 threads the bilayer; it reads TSRLLLAGVALGIICSALMTWAIYF. The Periplasmic portion of the chain corresponds to 167 to 190; sequence STSVDLRQLMYWMMGGFGGVDWRQ. A helical transmembrane segment spans residues 191–206; it reads SWLMLALIPMLLWICC. Topologically, residues 207-228 are cytoplasmic; that stretch reads QSRPMNMLALGEISARQLGLPL. The helical transmembrane segment at 229 to 249 threads the bilayer; it reads WFWRNVLVAATGWMVGVSVAL. The Periplasmic portion of the chain corresponds to 250–257; the sequence is AGAIGFIG. The helical transmembrane segment at 258-267 threads the bilayer; that stretch reads LVIPHILRLC. Residues 268 to 274 lie on the Cytoplasmic side of the membrane; it reads GLTDHRA. The helical transmembrane segment at 275–296 threads the bilayer; sequence LLPGCALAGASALLLADIVARL. The Periplasmic portion of the chain corresponds to 297 to 304; sequence ALAAAELP. A helical membrane pass occupies residues 305-324; that stretch reads IGVVTATLGAPVFIWLLLKA. At 325–326 the chain is on the cytoplasmic side; that stretch reads GR.

The protein belongs to the binding-protein-dependent transport system permease family. FecCD subfamily. In terms of assembly, the complex is composed of two ATP-binding proteins (BtuD), two transmembrane proteins (BtuC) and a solute-binding protein (BtuF).

It localises to the cell inner membrane. Part of the ABC transporter complex BtuCDF involved in vitamin B12 import. Involved in the translocation of the substrate across the membrane. The chain is Vitamin B12 import system permease protein BtuC (btuC) from Escherichia coli O157:H7.